Reading from the N-terminus, the 583-residue chain is CTP synthase (583 aa).

Positions 1 to 278 (MRKHPQTATK…DAYVVRRLNL (278 aa)) are amidoligase domain. Ser20 contributes to the CTP binding site. Residue Ser20 coordinates UTP. ATP contacts are provided by residues 21–26 (SLGKGL) and Asp78. Mg(2+) is bound by residues Asp78 and Glu152. CTP contacts are provided by residues 159–161 (DIE), 199–204 (KTKPTQ), and Lys235. UTP contacts are provided by residues 199-204 (KTKPTQ) and Lys235. The 249-residue stretch at 303–551 (RIALVGKYVE…VGAAMDYKAG (249 aa)) folds into the Glutamine amidotransferase type-1 domain. Gly366 lines the L-glutamine pocket. Cys393 functions as the Nucleophile; for glutamine hydrolysis in the catalytic mechanism. Residues 394 to 397 (LGLQ), Glu416, and Arg477 each bind L-glutamine. Catalysis depends on residues His524 and Glu526. Positions 560 to 583 (EQSSNGIQHRDSAARPIPEPAARG) are disordered.

The protein belongs to the CTP synthase family. Homotetramer.

The catalysed reaction is UTP + L-glutamine + ATP + H2O = CTP + L-glutamate + ADP + phosphate + 2 H(+). It carries out the reaction L-glutamine + H2O = L-glutamate + NH4(+). The enzyme catalyses UTP + NH4(+) + ATP = CTP + ADP + phosphate + 2 H(+). The protein operates within pyrimidine metabolism; CTP biosynthesis via de novo pathway; CTP from UDP: step 2/2. Its activity is regulated as follows. Allosterically activated by GTP, when glutamine is the substrate; GTP has no effect on the reaction when ammonia is the substrate. The allosteric effector GTP functions by stabilizing the protein conformation that binds the tetrahedral intermediate(s) formed during glutamine hydrolysis. Inhibited by the product CTP, via allosteric rather than competitive inhibition. Functionally, catalyzes the ATP-dependent amination of UTP to CTP with either L-glutamine or ammonia as the source of nitrogen. Regulates intracellular CTP levels through interactions with the four ribonucleotide triphosphates. The protein is CTP synthase of Mycolicibacterium paratuberculosis (strain ATCC BAA-968 / K-10) (Mycobacterium paratuberculosis).